The primary structure comprises 407 residues: Formate-dependent phosphoribosylglycinamide formyltransferase (407 aa).

N(1)-(5-phospho-beta-D-ribosyl)glycinamide is bound by residues 28–29 (EL) and glutamate 88. ATP-binding positions include arginine 121, lysine 162, 167–172 (SSGKGQ), 202–205 (EGFI), and glutamate 210. An ATP-grasp domain is found at 126 to 320 (RLAAEELGVA…EFELHAKAIL (195 aa)). Mg(2+) contacts are provided by glutamate 279 and glutamate 291. Residues aspartate 298, lysine 367, and 374–375 (RR) each bind N(1)-(5-phospho-beta-D-ribosyl)glycinamide.

It belongs to the PurK/PurT family. In terms of assembly, homodimer.

The enzyme catalyses N(1)-(5-phospho-beta-D-ribosyl)glycinamide + formate + ATP = N(2)-formyl-N(1)-(5-phospho-beta-D-ribosyl)glycinamide + ADP + phosphate + H(+). Its pathway is purine metabolism; IMP biosynthesis via de novo pathway; N(2)-formyl-N(1)-(5-phospho-D-ribosyl)glycinamide from N(1)-(5-phospho-D-ribosyl)glycinamide (formate route): step 1/1. Functionally, involved in the de novo purine biosynthesis. Catalyzes the transfer of formate to 5-phospho-ribosyl-glycinamide (GAR), producing 5-phospho-ribosyl-N-formylglycinamide (FGAR). Formate is provided by PurU via hydrolysis of 10-formyl-tetrahydrofolate. In Herminiimonas arsenicoxydans, this protein is Formate-dependent phosphoribosylglycinamide formyltransferase.